The following is a 491-amino-acid chain: Ligand-gated ion channel 50 (491 aa).

The N-terminal stretch at 1–19 (MRFLLVLQLVFFYFSAATT) is a signal peptide. N-linked (GlcNAc...) asparagine glycans are attached at residues N55 and N101. C157 and C171 are joined by a disulfide. 3 helical membrane passes run 241–261 (LFQSYFPTSLTVISSWVGFFF), 265–287 (SVSARITLGVSSLLALTFQFGNV), and 302–322 (VWMIFSVIFIFCTLVELAIVC). N-linked (GlcNAc...) asparagine glycosylation is present at N418. A helical membrane pass occupies residues 465–485 (MIMFPLSFLIFNVVYWSIYFM).

The protein belongs to the ligand-gated ion channel (TC 1.A.9) family.

Its subcellular location is the postsynaptic cell membrane. It is found in the cell membrane. In Caenorhabditis elegans, this protein is Ligand-gated ion channel 50 (lgc-50).